A 207-amino-acid chain; its full sequence is Large ribosomal subunit protein uL4 (207 aa).

Residues 50–75 (KTKTVSEVSGTTKKPFKQKGTGNARQ) form a disordered region.

This sequence belongs to the universal ribosomal protein uL4 family. As to quaternary structure, part of the 50S ribosomal subunit.

One of the primary rRNA binding proteins, this protein initially binds near the 5'-end of the 23S rRNA. It is important during the early stages of 50S assembly. It makes multiple contacts with different domains of the 23S rRNA in the assembled 50S subunit and ribosome. In terms of biological role, forms part of the polypeptide exit tunnel. The protein is Large ribosomal subunit protein uL4 of Rickettsia felis (strain ATCC VR-1525 / URRWXCal2) (Rickettsia azadi).